A 98-amino-acid polypeptide reads, in one-letter code: Peptide YY (98 aa).

A signal peptide spans 1 to 28; the sequence is MVAVRRPWPVTVAMLLILLACLGALVDA. A Phosphoserine modification is found at serine 41. At tyrosine 64 the chain carries Tyrosine amide. Positions 68 to 98 are excised as a propeptide; that stretch reads DVPAALFSKLLFTDDSDSENLPFRPEGLDQW.

The protein belongs to the NPY family. The peptide YY form is cleaved at Pro-30 by the prolyl endopeptidase FAP (seprase) activity (in vitro) to generate peptide YY(3-36).

Its subcellular location is the secreted. This gut peptide inhibits exocrine pancreatic secretion, has a vasoconstrictory action and inhibitis jejunal and colonic mobility. In Mus musculus (Mouse), this protein is Peptide YY (Pyy).